The chain runs to 527 residues: MSDSRDPASDQMKQWKEQRASQRPDVLTTGGGNPIGDKLNIMTAGSRGPLLVQDVVFTDEMAHFDRERIPERVVHAKGAGAFGYFEVTHDITRYSKAKVFEHIGKRTPIAVRFSTVTGESGSADTVRDPRGFAVKFYTEDGNWDLVGNNTPIFFIRDAILFPSFIHSQKRNPQTHLKDPDMVWDFWSLRPESLHQVSFLFSDRGIPDGHRHMNGYGSHTFKLVNADGEAVYCKFHYKTDQGIKNLPVGEAGRLAQEDPDYGLRDLFNAIANGNYPSWTFYIQVMTFKEAETFPFNPFDLTKVWPHKDYPLIPVGKLVLNKNPVNYFAEVEQMAFDPSNMPPGIEPSPDKMLQGRLFAYPDTHRHRLGPNYLQIPVNCPYRARVANYQRDGPMCMHDNQGGAPNYYPNSFSAPEQQRSALEHSVQCAVDVKRFNSANEDNVTQVRTFYTKVLNEEERKRLCENIAGHLKDAQLFIQKKAVKNFTDVHPDYGARIQALLDKYNAEKPKNAIHTYTQAGSHMAAKGKANL.

A compositionally biased stretch (basic and acidic residues) spans 1-22 (MSDSRDPASDQMKQWKEQRASQ). The segment at 1 to 34 (MSDSRDPASDQMKQWKEQRASQRPDVLTTGGGNP) is disordered. S2 is modified (N-acetylserine). The residue at position 9 (S9) is a Phosphoserine. Position 13 is an N6-succinyllysine (K13). Phosphoserine is present on S21. Residues H75 and N148 contribute to the active site. Residues H194, S201, R203, and N213 each contribute to the NADP(+) site. N6-succinyllysine is present on K221. The residue at position 233 (K233) is an N6-acetyllysine. Residues K237, W303, H305, and K306 each coordinate NADP(+). Position 306 is an N6-acetyllysine; alternate (K306). An N6-succinyllysine; alternate modification is found at K306. Y358 is a heme binding site. A phosphoserine mark is found at S417 and S422. N6-acetyllysine; alternate is present on K430. K430 carries the N6-succinyllysine; alternate modification. S434 carries the phosphoserine modification. K449 and K480 each carry N6-acetyllysine; alternate. An N6-succinyllysine; alternate mark is found at K449 and K480. K499 bears the N6-acetyllysine mark. T511 carries the phosphothreonine modification. S517 is subject to Phosphoserine. At K522 the chain carries N6-succinyllysine. A Microbody targeting signal; atypical motif is present at residues 524 to 527 (KANL).

It belongs to the catalase family. In terms of assembly, homotetramer. Interacts (via microbody targeting signal) with PEX5, monomeric form interacts with PEX5, leading to its translocation into peroxisomes. Requires heme as cofactor. NADP(+) is required as a cofactor.

The protein resides in the peroxisome matrix. The catalysed reaction is 2 H2O2 = O2 + 2 H2O. Its function is as follows. Catalyzes the degradation of hydrogen peroxide (H(2)O(2)) generated by peroxisomal oxidases to water and oxygen, thereby protecting cells from the toxic effects of hydrogen peroxide. Promotes growth of cells including T-cells, B-cells, myeloid leukemia cells, melanoma cells, mastocytoma cells and normal and transformed fibroblast cells. The polypeptide is Catalase (Cat) (Mus musculus (Mouse)).